A 425-amino-acid chain; its full sequence is Raffinose permease (425 aa).

The Cytoplasmic segment spans residues 1–11; that stretch reads MNSASTHKNTD. Residues 12 to 32 form a helical membrane-spanning segment; that stretch reads FWIFGLFFFLYFFIMATCFPF. Topologically, residues 33–48 are periplasmic; the sequence is LPVWLSDVVGLSKTDT. Residues 49–69 form a helical membrane-spanning segment; it reads GIVFSCLSLFAISFQPLLGVI. Residues 70-78 are Cytoplasmic-facing; that stretch reads SDRLGLKKN. A helical transmembrane segment spans residues 79–99; it reads LIWSISLLLVFFAPFFLYVFA. The Periplasmic segment spans residues 100 to 105; sequence PLLHLN. A helical membrane pass occupies residues 106-126; that stretch reads IWAGALTGGVFIGFVFSAGAG. The Cytoplasmic portion of the chain corresponds to 127–147; it reads AIEAYIERVSRSSGFEYGKAR. A helical transmembrane segment spans residues 148 to 168; that stretch reads MFGCLGWALCATMAGILFNVD. Residue proline 169 is a topological domain, periplasmic. The chain crosses the membrane as a helical span at residues 170–190; sequence SLVFWMGSGGALLLLLLLYLA. Residues 191-229 are Cytoplasmic-facing; it reads RPSTSQTAMVMNALGANSSLISTRMVFSLFRMRQMWMFV. A helical membrane pass occupies residues 230-250; the sequence is LYTIGVACVYDVFDQQFAIFF. Over 251–265 the chain is Periplasmic; it reads RSFFDTPQAGIKAFG. Residues 266–286 form a helical membrane-spanning segment; that stretch reads FATTAGEICNAIIMFCTPWII. At 287-294 the chain is on the cytoplasmic side; sequence NRIGAKNT. Residues 295-315 form a helical membrane-spanning segment; the sequence is LLVAGGIMTIRITGSAFATTM. Threonine 316 is a topological domain (periplasmic). The helical transmembrane segment at 317-337 threads the bilayer; the sequence is EVVILKMLHALEVPFLLVGAF. Over 338 to 351 the chain is Cytoplasmic; it reads KYITGVFDTRLSAT. A helical membrane pass occupies residues 352-372; the sequence is VYLIGFQFSKQLAAILLSTFA. Residues 373-383 lie on the Periplasmic side of the membrane; that stretch reads GHLYDRMGFQN. Residues 384–404 form a helical membrane-spanning segment; the sequence is TYFVLGMIVLTVTVISAFTLS. Over 405–425 the chain is Cytoplasmic; the sequence is SSPGIVHPSVEKAPVAHSEIN.

Belongs to the major facilitator superfamily. Oligosaccharide:H(+) symporter (OHS) (TC 2.A.1.5) family. As to quaternary structure, monomer.

The protein resides in the cell inner membrane. Functionally, responsible for transport of raffinose into the cell. Can also transport lactose and melibiose. Has weak activity with maltose. The sequence is that of Raffinose permease from Escherichia coli.